Consider the following 418-residue polypeptide: 3-phosphoshikimate 1-carboxyvinyltransferase (418 aa).

Residues K26, S27, and R31 each coordinate 3-phosphoshikimate. Residue K26 coordinates phosphoenolpyruvate. Phosphoenolpyruvate-binding residues include G97 and R125. S170, S171, Q172, D297, N320, and K324 together coordinate 3-phosphoshikimate. Residue Q172 coordinates phosphoenolpyruvate. D297 acts as the Proton acceptor in catalysis. The phosphoenolpyruvate site is built by R328, R375, and K400.

This sequence belongs to the EPSP synthase family. In terms of assembly, monomer.

It localises to the cytoplasm. It carries out the reaction 3-phosphoshikimate + phosphoenolpyruvate = 5-O-(1-carboxyvinyl)-3-phosphoshikimate + phosphate. It participates in metabolic intermediate biosynthesis; chorismate biosynthesis; chorismate from D-erythrose 4-phosphate and phosphoenolpyruvate: step 6/7. In terms of biological role, catalyzes the transfer of the enolpyruvyl moiety of phosphoenolpyruvate (PEP) to the 5-hydroxyl of shikimate-3-phosphate (S3P) to produce enolpyruvyl shikimate-3-phosphate and inorganic phosphate. The polypeptide is 3-phosphoshikimate 1-carboxyvinyltransferase (Pseudomonas savastanoi pv. phaseolicola (strain 1448A / Race 6) (Pseudomonas syringae pv. phaseolicola (strain 1448A / Race 6))).